An 804-amino-acid chain; its full sequence is Exocyst complex component 6 (804 aa).

This sequence belongs to the SEC15 family. The exocyst complex is composed of EXOC1, EXOC2, EXOC3, EXOC4, EXOC5, EXOC6, EXOC7 and EXOC8. Interacts with CNTRL. Interacts with RAB11A in a GTP-dependent manner.

The protein resides in the cytoplasm. It is found in the perinuclear region. It localises to the cell projection. Its subcellular location is the growth cone. The protein localises to the midbody. The protein resides in the midbody ring. Its function is as follows. Component of the exocyst complex involved in the docking of exocytic vesicles with fusion sites on the plasma membrane. Together with RAB11A, RAB3IP, RAB8A, PARD3, PRKCI, ANXA2, CDC42 and DNMBP promotes transcytosis of PODXL to the apical membrane initiation sites (AMIS), apical surface formation and lumenogenesis. The protein is Exocyst complex component 6 (Exoc6) of Rattus norvegicus (Rat).